Reading from the N-terminus, the 306-residue chain is Glutathione transport system permease protein GsiC (306 aa).

Residues 1 to 8 are Cytoplasmic-facing; it reads MLNYVLKR. The chain crosses the membrane as a helical span at residues 9–29; that stretch reads LLGLIPTLLIVAVLVFLFVHL. At 30–102 the chain is on the periplasmic side; that stretch reads LPGDPARLIA…SRFLPTLWLT (73 aa). Residues 95-292 enclose the ABC transmembrane type-1 domain; that stretch reads FLPTLWLTIT…LEFILINLVV (198 aa). A helical transmembrane segment spans residues 103-123; it reads ITSMIWAVLFGMAIGIAAAVW. The Cytoplasmic segment spans residues 124-134; the sequence is RNRWPDRLGMT. The chain crosses the membrane as a helical span at residues 135–155; it reads LAVTGISFPAFALGMLLMQIF. Residues 156–168 are Periplasmic-facing; the sequence is SVDLGWLPTVGAD. Residues 169 to 189 traverse the membrane as a helical segment; it reads SWQHYILPSLTLGAAVASVMA. At 190 to 228 the chain is on the cytoplasmic side; that stretch reads RFTRSSFVDVLSEDYMRTARAKGVSETWVVLKHGLRNAM. A helical transmembrane segment spans residues 229-249; the sequence is IPVVTMMGLQFGFLLGGSIVV. Residues 250 to 278 are Periplasmic-facing; sequence EKVFNWPGLGRLLVDSVDMRDYPVIQAEV. The helical transmembrane segment at 279–299 threads the bilayer; it reads LLFSLEFILINLVVDVLYAAI. Over 300–306 the chain is Cytoplasmic; the sequence is NPAIRYK.

Belongs to the binding-protein-dependent transport system permease family. As to quaternary structure, the complex is composed of two ATP-binding proteins (GsiA), two transmembrane proteins (GsiC and GsiD) and a solute-binding protein (GsiB).

It localises to the cell inner membrane. Functionally, part of the ABC transporter complex GsiABCD involved in glutathione import. Probably responsible for the translocation of the substrate across the membrane. The protein is Glutathione transport system permease protein GsiC of Salmonella typhimurium (strain LT2 / SGSC1412 / ATCC 700720).